The primary structure comprises 128 residues: Putative pre-16S rRNA nuclease (128 aa).

This sequence belongs to the YqgF nuclease family.

The protein resides in the cytoplasm. Functionally, could be a nuclease involved in processing of the 5'-end of pre-16S rRNA. The chain is Putative pre-16S rRNA nuclease from Campylobacter lari (strain RM2100 / D67 / ATCC BAA-1060).